Reading from the N-terminus, the 237-residue chain is Probable transcriptional regulatory protein MCAP_0598 (237 aa).

This sequence belongs to the TACO1 family.

The protein resides in the cytoplasm. In Mycoplasma capricolum subsp. capricolum (strain California kid / ATCC 27343 / NCTC 10154), this protein is Probable transcriptional regulatory protein MCAP_0598.